A 426-amino-acid chain; its full sequence is Elongation factor Tu, mitochondrial (426 aa).

Residues 1-27 (MFKNLAGSFRAVSRVAFKTRPSLVRSY) constitute a mitochondrion transit peptide. In terms of domain architecture, tr-type G spans 34-230 (KPHVNIGTIG…AVDEHIPTPT (197 aa)). The tract at residues 43-50 (GHVDHGKT) is G1. Residue 43–50 (GHVDHGKT) participates in GTP binding. The G2 stretch occupies residues 84 to 88 (GITIS). Residues 105–108 (DCPG) form a G3 region. Residues 105–109 (DCPGH) and 160–163 (NKVD) contribute to the GTP site. Positions 160-163 (NKVD) are G4. The tract at residues 198 to 200 (SAL) is G5.

The protein belongs to the TRAFAC class translation factor GTPase superfamily. Classic translation factor GTPase family. EF-Tu/EF-1A subfamily.

Its subcellular location is the mitochondrion. Its pathway is protein biosynthesis; polypeptide chain elongation. In terms of biological role, G-protein that, in its active GTP-bound form, binds to and delivers aminoacyl-tRNA to the A-site of ribosomes during protein biosynthesis. In the presence of a correct codon-anticodon match between the aminoacyl-tRNA and the A-site codon of the ribosome-bound mRNA, the ribosome acts as a GTPase activator and the GTP is hydrolyzed. The inactive GDP-bound form leaves the ribosome and must be recycled before binding another molecule of aminoacyl-tRNA. Required for mitochondrial protein biosynthesis and maintenance of mitochondrial DNA. In Meyerozyma guilliermondii (strain ATCC 6260 / CBS 566 / DSM 6381 / JCM 1539 / NBRC 10279 / NRRL Y-324) (Yeast), this protein is Elongation factor Tu, mitochondrial (TUF1).